Here is a 173-residue protein sequence, read N- to C-terminus: Protein Rv3753c (173 aa).

This is Protein Rv3753c from Mycobacterium tuberculosis (strain ATCC 25618 / H37Rv).